The sequence spans 160 residues: Small ribosomal subunit protein uS19 (160 aa).

The protein belongs to the universal ribosomal protein uS19 family.

Protein S19 forms a complex with S13 that binds strongly to the 16S ribosomal RNA. The sequence is that of Small ribosomal subunit protein uS19 from Pyrobaculum islandicum (strain DSM 4184 / JCM 9189 / GEO3).